The following is a 269-amino-acid chain: 4-hydroxy-tetrahydrodipicolinate reductase (269 aa).

11-16 (GPIGRM) lines the NAD(+) pocket. Residue lysine 39 participates in NADP(+) binding. NAD(+) contacts are provided by residues 101-103 (GTT) and 125-128 (ASNF). The active-site Proton donor/acceptor is histidine 158. Residue histidine 159 participates in (S)-2,3,4,5-tetrahydrodipicolinate binding. The active-site Proton donor is lysine 162. 168 to 169 (GT) lines the (S)-2,3,4,5-tetrahydrodipicolinate pocket.

This sequence belongs to the DapB family. In terms of assembly, homotetramer.

The protein resides in the cytoplasm. The catalysed reaction is (S)-2,3,4,5-tetrahydrodipicolinate + NAD(+) + H2O = (2S,4S)-4-hydroxy-2,3,4,5-tetrahydrodipicolinate + NADH + H(+). It carries out the reaction (S)-2,3,4,5-tetrahydrodipicolinate + NADP(+) + H2O = (2S,4S)-4-hydroxy-2,3,4,5-tetrahydrodipicolinate + NADPH + H(+). It functions in the pathway amino-acid biosynthesis; L-lysine biosynthesis via DAP pathway; (S)-tetrahydrodipicolinate from L-aspartate: step 4/4. Its function is as follows. Catalyzes the conversion of 4-hydroxy-tetrahydrodipicolinate (HTPA) to tetrahydrodipicolinate. The sequence is that of 4-hydroxy-tetrahydrodipicolinate reductase from Buchnera aphidicola subsp. Acyrthosiphon pisum (strain Tuc7).